Here is a 465-residue protein sequence, read N- to C-terminus: Alpha-galacturonidase (465 aa).

11–78 (ITIAYIGGGS…GKWLYKACET (68 aa)) is a binding site for NAD(+). N157 contacts substrate. C179 contacts Mn(2+). The Proton donor role is filled by H180. Residue H216 coordinates Mn(2+).

This sequence belongs to the glycosyl hydrolase 4 family. As to quaternary structure, homotetramer. The cofactor is NAD(+). It depends on Mn(2+) as a cofactor.

The catalysed reaction is [(1-&gt;4)-alpha-D-galacturonosyl](n) + H2O = alpha-D-galacturonate + [(1-&gt;4)-alpha-D-galacturonosyl](n-1). Its function is as follows. Alpha-galacturonidase able to catalyze the hydrolysis of the chromogenic substrate p-nitrophenyl-alpha-D-galacturonic acid (pNPalphaGalUA). It is probable that alpha-1,4-di-galacturonate (GalUA(2)) is the naturally occurring substrate. This Thermoanaerobacterium saccharolyticum (strain DSM 8691 / JW/SL-YS485) protein is Alpha-galacturonidase.